Reading from the N-terminus, the 241-residue chain is Platelet-derived growth factor subunit B (241 aa).

Positions Met-1–Ala-20 are cleaved as a signal peptide. Positions Glu-21–Arg-81 are cleaved as a propeptide — removed in mature form. An N-linked (GlcNAc...) asparagine glycan is attached at Asn-63. 3 disulfides stabilise this stretch: Cys-97-Cys-141, Cys-130-Cys-178, and Cys-134-Cys-180. A propeptide spans Arg-191–Ala-241 (removed in mature form). The span at Arg-216–His-230 shows a compositional bias: basic residues. A disordered region spans residues Arg-216 to Ala-241.

Belongs to the PDGF/VEGF growth factor family. In terms of assembly, antiparallel homodimer; disulfide-linked. Antiparallel heterodimer with PDGFA; disulfide-linked. The PDGFB homodimer interacts with PDGFRA and PDGFRB homodimers, and with heterodimers formed by PDGFRA and PDGFRB. The heterodimer composed of PDGFA and PDGFB interacts with PDGFRB homodimers, and with heterodimers formed by PDGFRA and PDGFRB. Interacts with XLKD1. Interacts with LRP1. Interacts with SORL1 (via the N-terminal ectodomain). Interacts with CD82; this interaction inhibits PDGFB-mediated signaling pathway. Expressed at high levels in the heart, brain (sustantia nigra), placenta and fetal kidney. Expressed at moderate levels in the brain (hippocampus), skeletal muscle, kidney and lung.

The protein localises to the secreted. Functionally, growth factor that plays an essential role in the regulation of embryonic development, cell proliferation, cell migration, survival and chemotaxis. Potent mitogen for cells of mesenchymal origin. Required for normal proliferation and recruitment of pericytes and vascular smooth muscle cells in the central nervous system, skin, lung, heart and placenta. Required for normal blood vessel development, and for normal development of kidney glomeruli. Plays an important role in wound healing. Signaling is modulated by the formation of heterodimers with PDGFA. This chain is Platelet-derived growth factor subunit B (PDGFB), found in Homo sapiens (Human).